The sequence spans 416 residues: Probable cysteine desulfurase (416 aa).

An N6-(pyridoxal phosphate)lysine modification is found at K236. The Cysteine persulfide intermediate role is filled by C374.

The protein belongs to the class-V pyridoxal-phosphate-dependent aminotransferase family. Csd subfamily. The cofactor is pyridoxal 5'-phosphate.

It carries out the reaction (sulfur carrier)-H + L-cysteine = (sulfur carrier)-SH + L-alanine. In terms of biological role, catalyzes the removal of elemental sulfur and selenium atoms from L-cysteine, L-cystine, L-selenocysteine, and L-selenocystine to produce L-alanine. The chain is Probable cysteine desulfurase (csd) from Xylella fastidiosa (strain 9a5c).